The following is a 330-amino-acid chain: Beta-ketoacyl-[acyl-carrier-protein] synthase III (330 aa).

Active-site residues include C114 and H254. The interval 255–259 (QANLR) is ACP-binding. The active site involves N284.

It belongs to the thiolase-like superfamily. FabH family. Homodimer.

It localises to the cytoplasm. It carries out the reaction malonyl-[ACP] + acetyl-CoA + H(+) = 3-oxobutanoyl-[ACP] + CO2 + CoA. It participates in lipid metabolism; fatty acid biosynthesis. Functionally, catalyzes the condensation reaction of fatty acid synthesis by the addition to an acyl acceptor of two carbons from malonyl-ACP. Catalyzes the first condensation reaction which initiates fatty acid synthesis and may therefore play a role in governing the total rate of fatty acid production. Possesses both acetoacetyl-ACP synthase and acetyl transacylase activities. Its substrate specificity determines the biosynthesis of branched-chain and/or straight-chain of fatty acids. In Roseiflexus castenholzii (strain DSM 13941 / HLO8), this protein is Beta-ketoacyl-[acyl-carrier-protein] synthase III.